The chain runs to 456 residues: Exodeoxyribonuclease 7 large subunit (456 aa).

It belongs to the XseA family. As to quaternary structure, heterooligomer composed of large and small subunits.

Its subcellular location is the cytoplasm. It catalyses the reaction Exonucleolytic cleavage in either 5'- to 3'- or 3'- to 5'-direction to yield nucleoside 5'-phosphates.. In terms of biological role, bidirectionally degrades single-stranded DNA into large acid-insoluble oligonucleotides, which are then degraded further into small acid-soluble oligonucleotides. In Lactobacillus gasseri (strain ATCC 33323 / DSM 20243 / BCRC 14619 / CIP 102991 / JCM 1131 / KCTC 3163 / NCIMB 11718 / NCTC 13722 / AM63), this protein is Exodeoxyribonuclease 7 large subunit.